Here is a 355-residue protein sequence, read N- to C-terminus: Uroporphyrinogen decarboxylase (355 aa).

Substrate-binding positions include R27–R31, D78, Y155, S210, and H328.

It belongs to the uroporphyrinogen decarboxylase family. Homodimer.

Its subcellular location is the cytoplasm. The catalysed reaction is uroporphyrinogen III + 4 H(+) = coproporphyrinogen III + 4 CO2. The protein operates within porphyrin-containing compound metabolism; protoporphyrin-IX biosynthesis; coproporphyrinogen-III from 5-aminolevulinate: step 4/4. In terms of biological role, catalyzes the decarboxylation of four acetate groups of uroporphyrinogen-III to yield coproporphyrinogen-III. This is Uroporphyrinogen decarboxylase from Pseudomonas aeruginosa (strain UCBPP-PA14).